Reading from the N-terminus, the 229-residue chain is Uracil-DNA glycosylase (229 aa).

Aspartate 64 acts as the Proton acceptor in catalysis.

It belongs to the uracil-DNA glycosylase (UDG) superfamily. UNG family.

The protein localises to the cytoplasm. The enzyme catalyses Hydrolyzes single-stranded DNA or mismatched double-stranded DNA and polynucleotides, releasing free uracil.. In terms of biological role, excises uracil residues from the DNA which can arise as a result of misincorporation of dUMP residues by DNA polymerase or due to deamination of cytosine. The chain is Uracil-DNA glycosylase from Geobacillus thermodenitrificans (strain NG80-2).